The following is a 320-amino-acid chain: ATP-dependent 6-phosphofructokinase (320 aa).

Residue glycine 12 coordinates ATP. Residues 22-26 (RGVVR) and 55-60 (RYSVSD) contribute to the ADP site. ATP-binding positions include 73–74 (RF) and 103–106 (GDGS). Residue aspartate 104 coordinates Mg(2+). Position 126–128 (126–128 (TID)) interacts with substrate. The active-site Proton acceptor is the aspartate 128. Position 155 (arginine 155) interacts with ADP. Residues arginine 163 and 170-172 (MGR) each bind substrate. ADP is bound by residues 186–188 (GCE), lysine 212, and 214–216 (KKH). Residues glutamate 223, arginine 244, and 250–253 (HIQR) each bind substrate.

The protein belongs to the phosphofructokinase type A (PFKA) family. ATP-dependent PFK group I subfamily. Prokaryotic clade 'B1' sub-subfamily. Homotetramer. The cofactor is Mg(2+).

The protein resides in the cytoplasm. The enzyme catalyses beta-D-fructose 6-phosphate + ATP = beta-D-fructose 1,6-bisphosphate + ADP + H(+). Its pathway is carbohydrate degradation; glycolysis; D-glyceraldehyde 3-phosphate and glycerone phosphate from D-glucose: step 3/4. Allosterically activated by ADP and other diphosphonucleosides, and allosterically inhibited by phosphoenolpyruvate. Its function is as follows. Catalyzes the phosphorylation of D-fructose 6-phosphate to fructose 1,6-bisphosphate by ATP, the first committing step of glycolysis. This is ATP-dependent 6-phosphofructokinase from Buchnera aphidicola subsp. Schizaphis graminum (strain Sg).